The chain runs to 564 residues: Phenylalanine--tRNA ligase beta subunit (564 aa).

In terms of domain architecture, B5 spans 286–362; sequence YFQNTLEVSV…IGRGLDSFKP (77 aa). Residues D340, D346, E349, and E350 each contribute to the Mg(2+) site.

This sequence belongs to the phenylalanyl-tRNA synthetase beta subunit family. Type 2 subfamily. Tetramer of two alpha and two beta subunits. Mg(2+) is required as a cofactor.

The protein resides in the cytoplasm. The enzyme catalyses tRNA(Phe) + L-phenylalanine + ATP = L-phenylalanyl-tRNA(Phe) + AMP + diphosphate + H(+). This Borrelia hermsii (strain HS1 / DAH) protein is Phenylalanine--tRNA ligase beta subunit.